The chain runs to 512 residues: Cytochrome P450 77A4 (512 aa).

The chain crosses the membrane as a helical span at residues 9-29 (PTSLDFTFFAIIISGFVFIIT). Cys456 serves as a coordination point for heme.

This sequence belongs to the cytochrome P450 family. The cofactor is heme.

The protein resides in the membrane. In terms of biological role, catalyzes the epoxidation of physiological unsaturated fatty acids in vitro. Can use laurate, oleate, linoleate, linolenate and vernolate as substrate. The polypeptide is Cytochrome P450 77A4 (CYP77A4) (Arabidopsis thaliana (Mouse-ear cress)).